The following is a 347-amino-acid chain: GMP reductase (347 aa).

Position 108–131 (108–131 (ADFEKTKQILDLNSALNFVCIDVA)) interacts with NADP(+). K(+) contacts are provided by Gly181 and Gly183. Cys186 serves as the catalytic Thioimidate intermediate. 216 to 239 (IVSDGGCTTPGDVAKAFGGGADFV) is a binding site for NADP(+).

It belongs to the IMPDH/GMPR family. GuaC type 1 subfamily. Homotetramer.

The enzyme catalyses IMP + NH4(+) + NADP(+) = GMP + NADPH + 2 H(+). Catalyzes the irreversible NADPH-dependent deamination of GMP to IMP. It functions in the conversion of nucleobase, nucleoside and nucleotide derivatives of G to A nucleotides, and in maintaining the intracellular balance of A and G nucleotides. The protein is GMP reductase of Escherichia coli O81 (strain ED1a).